The chain runs to 122 residues: Ig heavy chain V region M511 (122 aa).

Positions 1–114 (EVKLVESGGG…SYWYFDVWGA (114 aa)) constitute an Ig-like domain.

This chain is Ig heavy chain V region M511, found in Mus musculus (Mouse).